Here is a 249-residue protein sequence, read N- to C-terminus: 5'-nucleotidase SurE (249 aa).

D8, D9, S39, and N91 together coordinate a divalent metal cation.

This sequence belongs to the SurE nucleotidase family. Requires a divalent metal cation as cofactor.

Its subcellular location is the cytoplasm. It catalyses the reaction a ribonucleoside 5'-phosphate + H2O = a ribonucleoside + phosphate. In terms of biological role, nucleotidase that shows phosphatase activity on nucleoside 5'-monophosphates. This is 5'-nucleotidase SurE from Ectopseudomonas mendocina (strain ymp) (Pseudomonas mendocina).